The chain runs to 379 residues: Reducing end xylose-releasing exo-oligoxylanase (379 aa).

Catalysis depends on E66, which acts as the Proton donor. Residue D259 is the Proton acceptor of the active site.

This sequence belongs to the glycosyl hydrolase 8 (cellulase D) family.

It catalyses the reaction Hydrolysis of (1-&gt;4)-beta-D-xylose residues from the reducing end of oligosaccharides.. Hydrolyzes xylooligosaccharides with a degree of polymerization of greater than or equal to 3, releasing xylose from the reducing end. Has low activity on birchwood xylan, oat spelt xylan and arabinoxylan. The sequence is that of Reducing end xylose-releasing exo-oligoxylanase from Bifidobacterium adolescentis (strain ATCC 15703 / DSM 20083 / NCTC 11814 / E194a).